A 105-amino-acid chain; its full sequence is MAINNQRIRIRLKAFDHKLIDISTQEIVDTAKKTGAQVKGPIPLPVRKEKFTILISPHVNKKARDQYEIRTHKRLIDIVEPTDKTVDALMKLDLASGVDVQISLS.

Belongs to the universal ribosomal protein uS10 family. In terms of assembly, part of the 30S ribosomal subunit.

In terms of biological role, involved in the binding of tRNA to the ribosomes. This Francisella philomiragia subsp. philomiragia (strain ATCC 25017 / CCUG 19701 / FSC 153 / O#319-036) protein is Small ribosomal subunit protein uS10.